Reading from the N-terminus, the 282-residue chain is Undecaprenyl-diphosphatase (282 aa).

5 consecutive transmembrane segments (helical) span residues 96–116 (WMVI…KDII), 123–143 (MWIT…AEKW), 198–218 (FLLA…DAFA), 229–249 (QLAV…AWLL), and 260–280 (FAAY…TGML).

The protein belongs to the UppP family.

Its subcellular location is the cell membrane. It carries out the reaction di-trans,octa-cis-undecaprenyl diphosphate + H2O = di-trans,octa-cis-undecaprenyl phosphate + phosphate + H(+). Its function is as follows. Catalyzes the dephosphorylation of undecaprenyl diphosphate (UPP). Confers resistance to bacitracin. This Corynebacterium diphtheriae (strain ATCC 700971 / NCTC 13129 / Biotype gravis) protein is Undecaprenyl-diphosphatase.